The following is a 228-amino-acid chain: Thermonuclease (228 aa).

Residues 1–23 (MTEYLLSAGICMAIVSILLIGMA) form the signal peptide. Residues 24–60 (ISNVSKGQYAKRFFFFATSCLVLTLVVVSSLSSSANA) constitute a propeptide that is removed on maturation. Residue Asp-100 participates in Ca(2+) binding. The active site involves Arg-114. The Ca(2+) site is built by Asp-119 and Thr-120. Residues Glu-122 and Arg-166 contribute to the active site.

Belongs to the thermonuclease family. It depends on Ca(2+) as a cofactor.

The protein localises to the secreted. The catalysed reaction is Endonucleolytic cleavage to nucleoside 3'-phosphates and 3'-phosphooligonucleotide end-products.. Enzyme that catalyzes the hydrolysis of both DNA and RNA at the 5' position of the phosphodiester bond. In Staphylococcus aureus (strain MSSA476), this protein is Thermonuclease (nuc).